The primary structure comprises 183 residues: ATP-dependent protease subunit HslV (183 aa).

Thr7 is an active-site residue. The Na(+) site is built by Gly162, Cys165, and Thr168.

Belongs to the peptidase T1B family. HslV subfamily. In terms of assembly, a double ring-shaped homohexamer of HslV is capped on each side by a ring-shaped HslU homohexamer. The assembly of the HslU/HslV complex is dependent on binding of ATP.

The protein resides in the cytoplasm. It catalyses the reaction ATP-dependent cleavage of peptide bonds with broad specificity.. Allosterically activated by HslU binding. Its function is as follows. Protease subunit of a proteasome-like degradation complex believed to be a general protein degrading machinery. The polypeptide is ATP-dependent protease subunit HslV (Chromobacterium violaceum (strain ATCC 12472 / DSM 30191 / JCM 1249 / CCUG 213 / NBRC 12614 / NCIMB 9131 / NCTC 9757 / MK)).